The following is a 436-amino-acid chain: Chaperone protein dnaJ 16 (436 aa).

One can recognise a J domain in the interval 20-85; the sequence is DPYEVLGVLR…EKRRQFDSAG (66 aa). A coiled-coil region spans residues 291–348; the sequence is TQEKEDLRSVEAQILTKRAELAKFETEYREVLVQFTDMTSRYAQEMQSIDELLKQRNE. The segment at 360–416 is disordered; it reads KRSSSKNRMRKSSFKKAAAKAPAPTEQEEEEEEEEEEEEESSRQKNKKPSTCDKSET. A compositionally biased stretch (basic residues) spans 362–377; sequence SSSKNRMRKSSFKKAA. Residues 385–399 are compositionally biased toward acidic residues; it reads EQEEEEEEEEEEEEE.

This sequence belongs to the DnaJ family. B/II subfamily. As to expression, expressed constitutively in seedlings, roots, leaves, stems, flowers and siliques.

It is found in the membrane. Functionally, plays a continuous role in plant development probably in the structural organization of compartments. Seems to not be involved in gravitropism signaling pathway. The sequence is that of Chaperone protein dnaJ 16 (ATJ16) from Arabidopsis thaliana (Mouse-ear cress).